Consider the following 438-residue polypeptide: Battenin (438 aa).

The interval Met1–Tyr29 is disordered. The Cytoplasmic segment spans residues Met1 to Asn37. Ser14 carries the phosphoserine modification. Residues Val38–Ala58 traverse the membrane as a helical segment. The Lumenal portion of the chain corresponds to Ala59–Arg127. Residues Ala68–Arg89 form a disordered region. N-linked (GlcNAc...) asparagine glycans are attached at residues Asn71 and Asn85. A helical transmembrane segment spans residues Val128–Val148. Topologically, residues Gly149–Ser151 are cytoplasmic. Residues Leu152–Leu172 form a helical membrane-spanning segment. Residues Thr173–Ser182 are Lumenal-facing. Residues Trp183–Thr203 form a helical membrane-spanning segment. Residues Gln204 to Val277 are Cytoplasmic-facing. The interval Pro236 to Ser267 is disordered. The Lysosomal targeting motif motif lies at Glu242–Glu244. Positions Leu253–Ile254 match the Lysosomal targeting motif. Required for AP1G1, AP2A2 and AP3D1 interaction motif. A helical transmembrane segment spans residues Phe278–Ile298. Residues Asn299–Trp346 are Lumenal-facing. An N-linked (GlcNAc...) asparagine glycan is attached at Asn310. Residues Val347–Phe367 traverse the membrane as a helical segment. The Cytoplasmic portion of the chain corresponds to Leu368–Ser438. A Lysosomal targeting motif motif is present at residues Met409 to Gly419. Cys435 carries the cysteine methyl ester modification. Residue Cys435 is the site of S-farnesyl cysteine attachment. The propeptide at His436–Ser438 is removed in mature form.

It belongs to the battenin family. As to quaternary structure, interacts with DCTN1, KIF3A, RAB7A and RILP. Interacts with CLN5. In terms of processing, highly glycosylated. Farnesylation is important for trafficking to lysosomes.

Its subcellular location is the lysosome membrane. The protein localises to the late endosome. The protein resides in the lysosome. Functionally, mediates microtubule-dependent, anterograde transport connecting the Golgi network, endosomes, autophagosomes, lysosomes and plasma membrane, and participates in several cellular processes such as regulation of lysosomal pH, lysosome protein degradation, receptor-mediated endocytosis, autophagy, transport of proteins and lipids from the TGN, apoptosis and synaptic transmission. Facilitates the proteins transport from trans-Golgi network (TGN)-to other membrane compartments such as transport of microdomain-associated proteins to the plasma membrane, IGF2R transport to the lysosome where it regulates the CTSD release leading to regulation of CTSD maturation and thereby APP intracellular processing. Moreover regulates CTSD activity in response to osmotic stress. Also binds galactosylceramide and transports it from the trans Golgi to the rafts, which may have immediate and downstream effects on cell survival by modulating ceramide synthesis. At the plasma membrane, regulates actin-dependent events including filopodia formation, cell migration, and pinocytosis through ARF1-CDC42 pathway and also the cytoskeleton organization through interaction with MYH10 and fodrin leading to the regulation of the plasma membrane association of Na+, K+ ATPase complex. Regulates synaptic transmission in the amygdala, hippocampus, and cerebellum through regulation of synaptic vesicles density and their proximity to active zones leading to modulation of short-term plasticity and age-dependent anxious behavior, learning and memory. Regulates autophagic vacuoles (AVs) maturation by modulating the trafficking between endocytic and autophagolysosomal/lysosomal compartments, which involves vesicle fusion leading to regulation of degradation process. Also participates in cellular homeostasis of compounds such as, water, ions, amino acids, proteins and lipids in several tissue namely in brain and kidney through regulation of their transport and synthesis. The chain is Battenin from Canis lupus familiaris (Dog).